An 818-amino-acid chain; its full sequence is Glycogen phosphorylase (818 aa).

Residue Lys667 is modified to N6-(pyridoxal phosphate)lysine.

This sequence belongs to the glycogen phosphorylase family. The cofactor is pyridoxal 5'-phosphate.

The enzyme catalyses [(1-&gt;4)-alpha-D-glucosyl](n) + phosphate = [(1-&gt;4)-alpha-D-glucosyl](n-1) + alpha-D-glucose 1-phosphate. Its function is as follows. Phosphorylase is an important allosteric enzyme in carbohydrate metabolism. Enzymes from different sources differ in their regulatory mechanisms and in their natural substrates. However, all known phosphorylases share catalytic and structural properties. In Pasteurella multocida (strain Pm70), this protein is Glycogen phosphorylase (glgP).